Reading from the N-terminus, the 454-residue chain is tRNA modification GTPase MnmE (454 aa).

Arginine 23, glutamate 80, and lysine 120 together coordinate (6S)-5-formyl-5,6,7,8-tetrahydrofolate. A TrmE-type G domain is found at glycine 216 to glycine 377. K(+) is bound at residue asparagine 226. Residues asparagine 226 to serine 231, threonine 245 to threonine 251, aspartate 270 to glycine 273, asparagine 335 to aspartate 338, and serine 358 to arginine 360 each bind GTP. Serine 230 is a Mg(2+) binding site. K(+)-binding residues include threonine 245, isoleucine 247, and threonine 250. Threonine 251 serves as a coordination point for Mg(2+). Position 454 (lysine 454) interacts with (6S)-5-formyl-5,6,7,8-tetrahydrofolate.

It belongs to the TRAFAC class TrmE-Era-EngA-EngB-Septin-like GTPase superfamily. TrmE GTPase family. As to quaternary structure, homodimer. Heterotetramer of two MnmE and two MnmG subunits. K(+) is required as a cofactor.

Its subcellular location is the cytoplasm. In terms of biological role, exhibits a very high intrinsic GTPase hydrolysis rate. Involved in the addition of a carboxymethylaminomethyl (cmnm) group at the wobble position (U34) of certain tRNAs, forming tRNA-cmnm(5)s(2)U34. This is tRNA modification GTPase MnmE from Enterobacter sp. (strain 638).